The chain runs to 92 residues: Small ribosomal subunit protein uS19c (92 aa).

This sequence belongs to the universal ribosomal protein uS19 family.

The protein localises to the plastid. Its subcellular location is the chloroplast. Functionally, protein S19 forms a complex with S13 that binds strongly to the 16S ribosomal RNA. The protein is Small ribosomal subunit protein uS19c (rps19) of Glycine max (Soybean).